A 218-amino-acid chain; its full sequence is Type II restriction enzyme KpnI (218 aa).

It carries out the reaction Endonucleolytic cleavage of DNA to give specific double-stranded fragments with terminal 5'-phosphates.. In terms of biological role, a P subtype restriction enzyme that recognizes the double-stranded sequence 5'-GGTACC-3' and cleaves after C-5. The polypeptide is Type II restriction enzyme KpnI (Klebsiella pneumoniae).